The following is a 1690-amino-acid chain: Collagen alpha-4(IV) chain (1690 aa).

A signal peptide spans 1–38 (MWSLHIVLMRCSFRLTKSLATGPWSLILILFSVQYVYG). Residues 39–64 (SGKKYIGPCGGRDCSVCHCVPEKGSR) are 7S domain. Disordered regions lie at residues 61–173 (KGSR…GEKG) and 187–258 (GDRG…GPTL). The tract at residues 65-1459 (GPPGPPGPQG…IGDPGPKGFG (1395 aa)) is triple-helical region. The span at 66–75 (PPGPPGPQGP) shows a compositional bias: pro residues. Over residues 76–88 (IGPLGAPGPIGLS) the composition is skewed to low complexity. Residues 94–96 (RGD) carry the Cell attachment site motif. Residue Asn-142 is glycosylated (N-linked (GlcNAc...) asparagine). The Cell attachment site signature appears at 145–147 (RGD). Residues 149–164 (GFPGGRGALGPGGPLG) show a composition bias toward gly residues. A Cell attachment site motif is present at residues 189 to 191 (RGD). Residues 199–208 (GSWGAGGPAG) show a composition bias toward gly residues. Residues 310 to 312 (RGD) carry the Cell attachment site motif. 3 disordered regions span residues 369–390 (PGDP…PGPP), 405–451 (GPPG…GLQG), and 469–1457 (GIKG…GPKG). The span at 412–434 (FPGLPGLPGEAGIPGRPDSAPGK) shows a compositional bias: low complexity. Pro residues-rich tracts occupy residues 498-507 (PMGPPGPPGL) and 529-540 (PGPPGAEGPPGL). Over residues 586 to 607 (HGRDGHAGEKGDPGPPGDHEDA) the composition is skewed to basic and acidic residues. The span at 644-655 (PGVPGHPGVRGP) shows a compositional bias: low complexity. N-linked (GlcNAc...) asparagine glycosylation occurs at Asn-669. Over residues 681 to 690 (FDGPPGPKGF) the composition is skewed to pro residues. 2 consecutive short sequence motifs (cell attachment site) follow at residues 724 to 726 (RGD) and 785 to 787 (RGD). Over residues 849-858 (GAPGGKGQPG) the composition is skewed to gly residues. Low complexity-rich tracts occupy residues 866-880 (AGMK…RPGA) and 907-917 (PRGLPGFPGFP). Positions 989-991 (RGD) match the Cell attachment site motif. Residues 1023–1032 (PGPPGPPGPP) show a composition bias toward pro residues. Residues 1108-1117 (PGIQGPRGSP) show a composition bias toward low complexity. Residues 1119–1131 (RPGPPGSSGPPGC) are compositionally biased toward pro residues. Positions 1212–1214 (RGD) match the Cell attachment site motif. Pro residues-rich tracts occupy residues 1220-1243 (ISPP…PPGP), 1256-1280 (DPGP…PPGL), 1297-1309 (PGPP…PGPP), 1338-1353 (FPGP…PPGR), and 1443-1452 (GPGPPGPIGD). Residues 1465–1690 (GFLLVLHSQT…SRCQVCVKYS (226 aa)) enclose the Collagen IV NC1 domain. 6 disulfides stabilise this stretch: Cys-1480-Cys-1569, Cys-1513-Cys-1566, Cys-1525-Cys-1531, Cys-1588-Cys-1686, Cys-1622-Cys-1683, and Cys-1634-Cys-1641.

Belongs to the type IV collagen family. As to quaternary structure, there are six type IV collagen isoforms, alpha 1(IV)-alpha 6(IV), each of which can form a triple helix structure with 2 other chains to generate type IV collagen network. The alpha 3(IV) chain forms a triple helical protomer with alpha 4(IV) and alpha 5(IV); this triple helical structure dimerizes through NC1-NC1 domain interactions such that the alpha 3(IV), alpha 4(IV) and alpha 5(IV) chains of one protomer connect with the alpha 5(IV), alpha 4(IV) and alpha 3(IV) chains of the opposite protomer, respectively. Associates with LAMB2 at the neuromuscular junction and in GBM. Post-translationally, prolines at the third position of the tripeptide repeating unit (G-X-Y) are hydroxylated in some or all of the chains. In terms of processing, type IV collagens contain numerous cysteine residues which are involved in inter- and intramolecular disulfide bonding. 12 of these, located in the NC1 domain, are conserved in all known type IV collagens. The trimeric structure of the NC1 domains is stabilized by covalent bonds between Lys and Met residues. As to expression, expressed in Bruch's membrane, outer plexiform layer, inner nuclear layer, inner plexiform layer, ganglion cell layer, inner limiting membrane and around the blood vessels of the retina (at protein level). Alpha 3 and alpha 4 type IV collagens are colocalized and present in kidney, eye, basement membranes of lens capsule, cochlea, lung, skeletal muscle, aorta, synaptic fibers, fetal kidney and fetal lung. PubMed:8083201 reports similar levels of expression of alpha 3 and alpha 4 type IV collagens in kidney, but PubMed:7523402 reports that in kidney levels of alpha 3 type IV collagen are significantly lower than those of alpha 4 type IV collagen. Highest levels of expression of alpha 4 type IV collagen are detected in kidney, calvaria, neuroretina and cardiac muscle. Lower levels of expression are observed in brain, lung and thymus, and no expression is detected in choroid plexus, liver, adrenal, pancreas, ileum or skin.

The protein resides in the secreted. It localises to the extracellular space. Its subcellular location is the extracellular matrix. It is found in the basement membrane. In terms of biological role, type IV collagen is the major structural component of glomerular basement membranes (GBM), forming a 'chicken-wire' meshwork together with laminins, proteoglycans and entactin/nidogen. This Homo sapiens (Human) protein is Collagen alpha-4(IV) chain (COL4A4).